Consider the following 368-residue polypeptide: 3-isopropylmalate dehydrogenase (368 aa).

Position 79–91 (G79–E91) interacts with NAD(+). R98, R108, R137, and D226 together coordinate substrate. D226, D251, and D255 together coordinate Mg(2+). Residue G291–N303 participates in NAD(+) binding.

Belongs to the isocitrate and isopropylmalate dehydrogenases family. In terms of assembly, homodimer. Mg(2+) serves as cofactor. It depends on Mn(2+) as a cofactor.

The protein localises to the cytoplasm. The enzyme catalyses (2R,3S)-3-isopropylmalate + NAD(+) = 4-methyl-2-oxopentanoate + CO2 + NADH. Its pathway is amino-acid biosynthesis; L-leucine biosynthesis; L-leucine from 3-methyl-2-oxobutanoate: step 3/4. Catalyzes the oxidation of 3-carboxy-2-hydroxy-4-methylpentanoate (3-isopropylmalate) to 3-carboxy-4-methyl-2-oxopentanoate. The product decarboxylates to 4-methyl-2 oxopentanoate. This Neurospora crassa (strain ATCC 24698 / 74-OR23-1A / CBS 708.71 / DSM 1257 / FGSC 987) protein is 3-isopropylmalate dehydrogenase (leu-1).